We begin with the raw amino-acid sequence, 475 residues long: Ribulose bisphosphate carboxylase large chain (475 aa).

A propeptide spanning residues 1-2 (MS) is cleaved from the precursor. Pro-3 is modified (N-acetylproline). Position 14 is an N6,N6,N6-trimethyllysine (Lys-14). Substrate is bound by residues Asn-123 and Thr-173. Lys-175 serves as the catalytic Proton acceptor. Lys-177 is a binding site for substrate. Residues Lys-201, Asp-203, and Glu-204 each coordinate Mg(2+). Lys-201 is modified (N6-carboxylysine). Catalysis depends on His-294, which acts as the Proton acceptor. Substrate-binding residues include Arg-295, His-327, and Ser-379.

Belongs to the RuBisCO large chain family. Type I subfamily. Heterohexadecamer of 8 large chains and 8 small chains. Mg(2+) serves as cofactor.

It localises to the plastid. The protein localises to the chloroplast. The catalysed reaction is 2 (2R)-3-phosphoglycerate + 2 H(+) = D-ribulose 1,5-bisphosphate + CO2 + H2O. It carries out the reaction D-ribulose 1,5-bisphosphate + O2 = 2-phosphoglycolate + (2R)-3-phosphoglycerate + 2 H(+). RuBisCO catalyzes two reactions: the carboxylation of D-ribulose 1,5-bisphosphate, the primary event in carbon dioxide fixation, as well as the oxidative fragmentation of the pentose substrate in the photorespiration process. Both reactions occur simultaneously and in competition at the same active site. In Chlorella vulgaris (Green alga), this protein is Ribulose bisphosphate carboxylase large chain.